The sequence spans 445 residues: Glycine--tRNA ligase (445 aa).

Substrate contacts are provided by lysine 97 and glutamate 145. ATP-binding positions include 177-179, 187-192, 262-263, and 308-311; these read RNE, FRTCEF, EI, and GLTR. Residue 192 to 196 coordinates substrate; sequence FEQME. Residue 304-308 participates in substrate binding; that stretch reads ETSLG.

Belongs to the class-II aminoacyl-tRNA synthetase family. As to quaternary structure, homodimer.

It is found in the cytoplasm. It catalyses the reaction tRNA(Gly) + glycine + ATP = glycyl-tRNA(Gly) + AMP + diphosphate. Its function is as follows. Catalyzes the attachment of glycine to tRNA(Gly). The polypeptide is Glycine--tRNA ligase (Borrelia hermsii (strain HS1 / DAH)).